We begin with the raw amino-acid sequence, 79 residues long: Sulfur carrier protein TusA (79 aa).

C16 serves as the catalytic Cysteine persulfide intermediate.

It belongs to the sulfur carrier protein TusA family.

Its subcellular location is the cytoplasm. In terms of biological role, sulfur carrier protein which probably makes part of a sulfur-relay system. This is Sulfur carrier protein TusA from Pseudomonas paraeruginosa (strain DSM 24068 / PA7) (Pseudomonas aeruginosa (strain PA7)).